Here is a 403-residue protein sequence, read N- to C-terminus: Tyrosine--tRNA ligase (403 aa).

A 'HIGH' region motif is present at residues 42 to 51 (PTAPDLHLGH). Residues 226–230 (KMSKS) carry the 'KMSKS' region motif. K229 provides a ligand contact to ATP. In terms of domain architecture, S4 RNA-binding spans 339–400 (LRIASLLTAA…GKRNFARVSL (62 aa)).

The protein belongs to the class-I aminoacyl-tRNA synthetase family. TyrS type 2 subfamily. As to quaternary structure, homodimer.

Its subcellular location is the cytoplasm. The enzyme catalyses tRNA(Tyr) + L-tyrosine + ATP = L-tyrosyl-tRNA(Tyr) + AMP + diphosphate + H(+). Catalyzes the attachment of tyrosine to tRNA(Tyr) in a two-step reaction: tyrosine is first activated by ATP to form Tyr-AMP and then transferred to the acceptor end of tRNA(Tyr). The chain is Tyrosine--tRNA ligase from Xanthomonas oryzae pv. oryzae (strain MAFF 311018).